The primary structure comprises 99 residues: METLNFQFPAAEPGRGRTLVGCVSSGDLEVLIEPGTAGSLQIQVITSVNGSAARWAQLFQRLFEGRAWPAVNIDIHDFGATPGVVRLRLEQGFEEIAHD.

Position 25 is an O-(phosphoribosyl dephospho-coenzyme A)serine (Ser25).

The protein belongs to the MdcC family. In terms of processing, covalently binds the prosthetic group of malonate decarboxylase.

The protein resides in the cytoplasm. Its function is as follows. Subunit of malonate decarboxylase, it is an acyl carrier protein to which acetyl and malonyl thioester residues are bound via a 2'-(5''-phosphoribosyl)-3'-dephospho-CoA prosthetic group and turn over during the catalytic mechanism. The chain is Malonate decarboxylase acyl carrier protein from Pseudomonas putida (Arthrobacter siderocapsulatus).